Reading from the N-terminus, the 523-residue chain is Dynein regulatory complex subunit 3 (523 aa).

LRR repeat units follow at residues Asp44–Glu65, Asn66–Ile87, His88–Val109, Asn110–Val131, and Lys132–Arg153. One can recognise an LRRCT domain in the interval Asn166–Lys204. 2 coiled-coil regions span residues Lys204–Glu242 and Leu333–Leu393.

The protein belongs to the DRC3 family. Component of the nexin-dynein regulatory complex (N-DRC). Interacts with DRC1. Interacts with TCTE1/DRC5. Interacts with DRC7.

It is found in the cytoplasm. The protein resides in the cytoskeleton. The protein localises to the cilium axoneme. It localises to the cell projection. Its subcellular location is the cilium. It is found in the flagellum axoneme. The protein resides in the flagellum. Functionally, component of the nexin-dynein regulatory complex (N-DRC) a key regulator of ciliary/flagellar motility which maintains the alignment and integrity of the distal axoneme and regulates microtubule sliding in motile axonemes. This Mus musculus (Mouse) protein is Dynein regulatory complex subunit 3 (Drc3).